A 231-amino-acid polypeptide reads, in one-letter code: S-norcoclaurine synthase 1 (231 aa).

Position 107–109 (107–109 (YKE)) interacts with dopamine. The active-site Proton donor is the Lys-121. (4-hydroxyphenyl)acetaldehyde is bound at residue Asp-140. A helical transmembrane segment spans residues 210-230 (LLLCLIICLVIAGGMFVAGVP).

It belongs to the BetVI family. In terms of tissue distribution, detected in roots, stems, leaves, flower buds and germinating seeds.

Its subcellular location is the membrane. The catalysed reaction is (4-hydroxyphenyl)acetaldehyde + dopamine = (S)-norcoclaurine + H2O. It participates in alkaloid biosynthesis; (S)-reticuline biosynthesis. With respect to regulation, activity doubles within 5 hours of elicitor treatment and continues to increase for at least 80 hours. Involved in the biosynthesis of (S)-coclaurine, the common precursor of all benzylisoquinoline alkaloids such as morphine, sanguinarine, codeine or papaverine. Condenses dopamine and 4-hydroxyphenylacetaldehyde. The sequence is that of S-norcoclaurine synthase 1 from Papaver somniferum (Opium poppy).